The sequence spans 271 residues: tRNA (guanine-N(1)-)-methyltransferase (271 aa).

S-adenosyl-L-methionine contacts are provided by residues Gly120 and 145 to 150 (IGDYVL).

Belongs to the RNA methyltransferase TrmD family. In terms of assembly, homodimer.

It is found in the cytoplasm. It carries out the reaction guanosine(37) in tRNA + S-adenosyl-L-methionine = N(1)-methylguanosine(37) in tRNA + S-adenosyl-L-homocysteine + H(+). In terms of biological role, specifically methylates guanosine-37 in various tRNAs. The sequence is that of tRNA (guanine-N(1)-)-methyltransferase from Bifidobacterium longum (strain NCC 2705).